Reading from the N-terminus, the 306-residue chain is Serine/threonine-protein kinase mug51 (306 aa).

The protein belongs to the STK19 family.

It catalyses the reaction L-seryl-[protein] + ATP = O-phospho-L-seryl-[protein] + ADP + H(+). The catalysed reaction is L-threonyl-[protein] + ATP = O-phospho-L-threonyl-[protein] + ADP + H(+). In terms of biological role, serine/threonine-protein kinase. Has a role in meiosis. The polypeptide is Serine/threonine-protein kinase mug51 (mug51) (Schizosaccharomyces pombe (strain 972 / ATCC 24843) (Fission yeast)).